Consider the following 859-residue polypeptide: DNA mismatch repair protein MutS (859 aa).

Position 612–619 (612–619 (GPNMGGKS)) interacts with ATP. Positions 797–822 (SKPLAPSATPPSSYAAPSPAAAPAQA) are disordered.

The protein belongs to the DNA mismatch repair MutS family.

Functionally, this protein is involved in the repair of mismatches in DNA. It is possible that it carries out the mismatch recognition step. This protein has a weak ATPase activity. The sequence is that of DNA mismatch repair protein MutS from Alcanivorax borkumensis (strain ATCC 700651 / DSM 11573 / NCIMB 13689 / SK2).